Consider the following 319-residue polypeptide: Alpha/beta-gliadin A-V (319 aa).

The first 20 residues, 1–20, serve as a signal peptide directing secretion; sequence MKTFLILALLAIVATTATTA. Positions 28–58 are enriched in low complexity; it reads LQPQNPSQQQPQEQVPLVQQQQFPGQQQQFP. Disordered stretches follow at residues 28 to 125 and 258 to 278; these read LQPQ…QQAQ and SQVS…VQPQ. Composition is skewed to pro residues over residues 59 to 71 and 81 to 104; these read PQQP…PFPS and FPQP…PQQP. Residues 105 to 125 show a composition bias toward low complexity; the sequence is YPQQQPQYLQPQQPISQQQAQ. The span at 267-278 shows a compositional bias: polar residues; sequence LNPQAQGSVQPQ.

Belongs to the gliadin/glutenin family. Substrate of transglutaminase.

In terms of biological role, gliadin is the major seed storage protein in wheat. The protein is Alpha/beta-gliadin A-V of Triticum aestivum (Wheat).